The following is a 500-amino-acid chain: Betaine aldehyde dehydrogenase, chloroplastic (500 aa).

Residues 1–7 constitute a chloroplast transit peptide; it reads MSMPIPS. 238-243 contributes to the NAD(+) binding site; it reads GSSATG. Residue E260 is the Proton acceptor of the active site. Catalysis depends on C294, which acts as the Nucleophile.

This sequence belongs to the aldehyde dehydrogenase family. As to quaternary structure, homodimer.

The protein resides in the plastid. Its subcellular location is the chloroplast. The catalysed reaction is betaine aldehyde + NAD(+) + H2O = glycine betaine + NADH + 2 H(+). The protein operates within amine and polyamine biosynthesis; betaine biosynthesis via choline pathway; betaine from betaine aldehyde: step 1/1. In Beta vulgaris (Sugar beet), this protein is Betaine aldehyde dehydrogenase, chloroplastic.